Consider the following 133-residue polypeptide: Small ribosomal subunit protein uS8 (133 aa).

This sequence belongs to the universal ribosomal protein uS8 family. As to quaternary structure, part of the 30S ribosomal subunit. Contacts proteins S5 and S12.

In terms of biological role, one of the primary rRNA binding proteins, it binds directly to 16S rRNA central domain where it helps coordinate assembly of the platform of the 30S subunit. In Synechococcus sp. (strain RCC307), this protein is Small ribosomal subunit protein uS8.